The primary structure comprises 90 residues: U7-theraphotoxin-Hhn1a 5 (90 aa).

An N-terminal signal peptide occupies residues 1–19 (MKTAIFTVVLALAVFAVLS). A propeptide spanning residues 20–50 (FGWEANEKALSEESTELIHEKEAASETEARE) is cleaved from the precursor. 3 disulfides stabilise this stretch: Cys51–Cys65, Cys58–Cys70, and Cys64–Cys81.

This sequence belongs to the neurotoxin 10 (Hwtx-1) family. 13 (Hntx-13) subfamily. As to expression, expressed by the venom gland.

The protein localises to the secreted. Ion channel inhibitor. The sequence is that of U7-theraphotoxin-Hhn1a 5 from Cyriopagopus hainanus (Chinese bird spider).